Here is a 425-residue protein sequence, read N- to C-terminus: Putative TRAP transporter large permease protein HI_1029 (425 aa).

The next 13 helical transmembrane spans lie at 3–23, 24–44, 54–74, 93–113, 139–159, 169–189, 217–237, 241–261, 275–295, 312–332, 334–354, 355–375, and 399–419; these read VIIF…VAFA, LLIC…QILA, FSLM…EGGL, LGFV…SAVA, LIGT…FIVF, KLFL…AILW, VWAL…IFTP, GVVA…ELPL, TAVV…ITVA, PTIL…VMDL, PTVL…GIDP, VYFG…PPVG, and YLGM…LILM.

The protein belongs to the TRAP transporter large permease family.

The protein resides in the cell inner membrane. The protein is Putative TRAP transporter large permease protein HI_1029 of Haemophilus influenzae (strain ATCC 51907 / DSM 11121 / KW20 / Rd).